We begin with the raw amino-acid sequence, 300 residues long: Large ribosomal subunit protein bL9m (300 aa).

Belongs to the bacterial ribosomal protein bL9 family. Component of the mitochondrial large ribosomal subunit (mt-LSU). Mature N.crassa 74S mitochondrial ribosomes consist of a small (37S) and a large (54S) subunit. The 37S small subunit contains a 16S ribosomal RNA (16S mt-rRNA) and 32 different proteins. The 54S large subunit contains a 23S rRNA (23S mt-rRNA) and 42 different proteins.

It localises to the mitochondrion. In terms of biological role, component of the mitochondrial ribosome (mitoribosome), a dedicated translation machinery responsible for the synthesis of mitochondrial genome-encoded proteins, including at least some of the essential transmembrane subunits of the mitochondrial respiratory chain. The mitoribosomes are attached to the mitochondrial inner membrane and translation products are cotranslationally integrated into the membrane. This Neurospora crassa (strain ATCC 24698 / 74-OR23-1A / CBS 708.71 / DSM 1257 / FGSC 987) protein is Large ribosomal subunit protein bL9m (mrpl50).